Here is a 267-residue protein sequence, read N- to C-terminus: Undecaprenyl-diphosphatase (267 aa).

A run of 8 helical transmembrane segments spans residues 1 to 21 (MSEL…FLPI), 39 to 59 (QGLA…LIYF), 87 to 107 (WWIL…KSLV), 113 to 133 (SGYV…WADA), 144 to 164 (TGLK…IPGT), 189 to 209 (FLMS…KFIL), 219 to 239 (LFLG…VFLI), and 244 to 264 (VGMM…FYIL).

Belongs to the UppP family.

It localises to the cell inner membrane. The enzyme catalyses di-trans,octa-cis-undecaprenyl diphosphate + H2O = di-trans,octa-cis-undecaprenyl phosphate + phosphate + H(+). Its function is as follows. Catalyzes the dephosphorylation of undecaprenyl diphosphate (UPP). Confers resistance to bacitracin. This chain is Undecaprenyl-diphosphatase, found in Psychromonas ingrahamii (strain DSM 17664 / CCUG 51855 / 37).